Here is a 103-residue protein sequence, read N- to C-terminus: UPF0132 membrane protein AF_0105 (103 aa).

3 consecutive transmembrane segments (helical) span residues 5–25 (VAGA…LLME), 35–55 (AMQS…LSFI), and 58–78 (IGVL…LVCI).

Belongs to the UPF0132 family.

The protein localises to the cell membrane. The chain is UPF0132 membrane protein AF_0105 from Archaeoglobus fulgidus (strain ATCC 49558 / DSM 4304 / JCM 9628 / NBRC 100126 / VC-16).